The following is a 92-amino-acid chain: Small ribosomal subunit protein uS19c (92 aa).

Belongs to the universal ribosomal protein uS19 family.

It is found in the plastid. Its subcellular location is the chloroplast. Its function is as follows. Protein S19 forms a complex with S13 that binds strongly to the 16S ribosomal RNA. This is Small ribosomal subunit protein uS19c (rps19) from Glycine max (Soybean).